Here is a 365-residue protein sequence, read N- to C-terminus: MRGQFWLVMSCYIITIICKLAFCIKLIENEKSIFGFKSKKKDMKKLSNIKVRNWKQKKIQQFFIINKVKNKKYNNLKKSLNMEYSNTDDQRLSLLKNLENKSKIITQSPAWNEKIPLLEINDLHAIEVEGGKEILKGINLTIYLGEKHSIMGRNGSGKSTLAKVIAGHPYFKVTKGSMKFKGLNLTDLTVNHRSLCGIFLAFQYPIELPMVKNNEFLRTALNCHRRQNNEPELSPSEFDLLMINEIKKVGLSPEFLDRPVNYGFSGGEKKRNEILQMLILKPSFCILDETDSGLDVDSFKLTSDIIQKFSNINNSFLIVTHYKKLLELLKPNYIHIMHKGKIIKTGNYSLVDKIESDGYAQFVEE.

Residues 118-364 (LEINDLHAIE…ESDGYAQFVE (247 aa)) enclose the ABC transporter domain. 152 to 159 (GRNGSGKS) contributes to the ATP binding site.

The protein belongs to the ABC transporter superfamily. Ycf16 family. In terms of assembly, component of a complex composed of SufB, SufC and SufD in a stoichiometric ratio of 1:2:1. Interacts with SufB. Interacts with SufD; the interaction enhances the ATPase activity of SufC.

It is found in the plastid. It localises to the apicoplast. It catalyses the reaction ATP + H2O = ADP + phosphate + H(+). It functions in the pathway cofactor biosynthesis; iron-sulfur cluster biosynthesis. Its function is as follows. Participates in the sulfur mobilization (SUF) pathway for iron-sulfur (Fe-S) cluster biogenesis. As part of a complex consisting of SufB-SufC(2)-SufD, involved in assembly of [4Fe-4S] clusters. Exhibits ATPase activity. This chain is Iron-sulfur cluster assembly protein SufC, found in Plasmodium berghei (strain Anka).